We begin with the raw amino-acid sequence, 276 residues long: Phosphatidylglycerol--prolipoprotein diacylglyceryl transferase (276 aa).

A run of 7 helical transmembrane segments spans residues phenylalanine 17–tryptophan 37, phenylalanine 59–tyrosine 79, valine 94–isoleucine 114, valine 132–tryptophan 152, proline 177–alanine 197, glycine 208–alanine 225, and leucine 235–isoleucine 255. Arginine 142 is an a 1,2-diacyl-sn-glycero-3-phospho-(1'-sn-glycerol) binding site.

The protein belongs to the Lgt family.

It is found in the cell inner membrane. It carries out the reaction L-cysteinyl-[prolipoprotein] + a 1,2-diacyl-sn-glycero-3-phospho-(1'-sn-glycerol) = an S-1,2-diacyl-sn-glyceryl-L-cysteinyl-[prolipoprotein] + sn-glycerol 1-phosphate + H(+). The protein operates within protein modification; lipoprotein biosynthesis (diacylglyceryl transfer). Catalyzes the transfer of the diacylglyceryl group from phosphatidylglycerol to the sulfhydryl group of the N-terminal cysteine of a prolipoprotein, the first step in the formation of mature lipoproteins. In Acidiphilium cryptum (strain JF-5), this protein is Phosphatidylglycerol--prolipoprotein diacylglyceryl transferase.